Reading from the N-terminus, the 1581-residue chain is Pentafunctional AROM polypeptide (1581 aa).

Residues 1 to 384 (MPEPTKISIL…YEPKASVVPN (384 aa)) form a 3-dehydroquinate synthase region. Residues 44–46 (DTN), 81–84 (EVSK), 114–116 (GGV), and D119 each bind NAD(+). R130 is a 7-phospho-2-dehydro-3-deoxy-D-arabino-heptonate binding site. 139-140 (TT) contributes to the NAD(+) binding site. D146 and K152 together coordinate 7-phospho-2-dehydro-3-deoxy-D-arabino-heptonate. An NAD(+)-binding site is contributed by K161. Residue N162 coordinates 7-phospho-2-dehydro-3-deoxy-D-arabino-heptonate. Residues 179-182 (FLET) and N190 contribute to the NAD(+) site. E194 is a Zn(2+) binding site. Residues 194-197 (EVIK) and K250 each bind 7-phospho-2-dehydro-3-deoxy-D-arabino-heptonate. E260 (proton acceptor; for 3-dehydroquinate synthase activity) is an active-site residue. Residues 264-268 (RNLLN) and H271 contribute to the 7-phospho-2-dehydro-3-deoxy-D-arabino-heptonate site. H271 lines the Zn(2+) pocket. H275 serves as the catalytic Proton acceptor; for 3-dehydroquinate synthase activity. 7-phospho-2-dehydro-3-deoxy-D-arabino-heptonate contacts are provided by H287 and K356. Position 287 (H287) interacts with Zn(2+). Positions 397–842 (VHPGVPKESN…WDTLRQLFSV (446 aa)) are EPSP synthase. The active-site For EPSP synthase activity is C824. Residues 864–1056 (SASVFIIGMR…KQKKHSFFVS (193 aa)) are shikimate kinase. 871 to 878 (GMRGAGKT) contributes to the ATP binding site. The segment at 1057-1277 (LTLPDLRSAS…AAPGQLSATE (221 aa)) is 3-dehydroquinase. The active-site Proton acceptor; for 3-dehydroquinate dehydratase activity is the H1180. The active-site Schiff-base intermediate with substrate; for 3-dehydroquinate dehydratase activity is the K1208. The tract at residues 1290 to 1581 (KKRFAIFGNP…ARTAVLGDSA (292 aa)) is shikimate dehydrogenase.

In the N-terminal section; belongs to the sugar phosphate cyclases superfamily. Dehydroquinate synthase family. It in the 2nd section; belongs to the EPSP synthase family. The protein in the 3rd section; belongs to the shikimate kinase family. This sequence in the 4th section; belongs to the type-I 3-dehydroquinase family. In the C-terminal section; belongs to the shikimate dehydrogenase family. As to quaternary structure, homodimer. The cofactor is Zn(2+).

The protein resides in the cytoplasm. The enzyme catalyses 7-phospho-2-dehydro-3-deoxy-D-arabino-heptonate = 3-dehydroquinate + phosphate. The catalysed reaction is 3-dehydroquinate = 3-dehydroshikimate + H2O. It carries out the reaction shikimate + NADP(+) = 3-dehydroshikimate + NADPH + H(+). It catalyses the reaction shikimate + ATP = 3-phosphoshikimate + ADP + H(+). The enzyme catalyses 3-phosphoshikimate + phosphoenolpyruvate = 5-O-(1-carboxyvinyl)-3-phosphoshikimate + phosphate. Its pathway is metabolic intermediate biosynthesis; chorismate biosynthesis; chorismate from D-erythrose 4-phosphate and phosphoenolpyruvate: step 2/7. It participates in metabolic intermediate biosynthesis; chorismate biosynthesis; chorismate from D-erythrose 4-phosphate and phosphoenolpyruvate: step 3/7. It functions in the pathway metabolic intermediate biosynthesis; chorismate biosynthesis; chorismate from D-erythrose 4-phosphate and phosphoenolpyruvate: step 4/7. The protein operates within metabolic intermediate biosynthesis; chorismate biosynthesis; chorismate from D-erythrose 4-phosphate and phosphoenolpyruvate: step 5/7. Its pathway is metabolic intermediate biosynthesis; chorismate biosynthesis; chorismate from D-erythrose 4-phosphate and phosphoenolpyruvate: step 6/7. Its function is as follows. The AROM polypeptide catalyzes 5 consecutive enzymatic reactions in prechorismate polyaromatic amino acid biosynthesis. The protein is Pentafunctional AROM polypeptide of Aspergillus terreus (strain NIH 2624 / FGSC A1156).